A 368-amino-acid polypeptide reads, in one-letter code: MNKKTIVVKFGTSTLTQGSPKLNSPHMMEIVRQIAQLHNDGFRIVIVTSGAIAAGRHYLNHPQLPPTIASKQLLAAVGQSQLIQAWEKLFAIYDIHIGQLLLTRADIEDRERFLNARDTLHALLDNHIIPVINENDAVATAEIKVGDNDNLSALVAILVQAEQLYLLTDQQGLFDSDPRKNPEAKLIPVVEQITDHIRSIAGGSGTNLGTGGMMTKIIAADVATRSGIETIIAPGNRPNVIADLAYEQNIGTKFIAHQSDRLESRKQWLFAAPSAGIITIDNGAQNAILEQNKSLLPAGIINVEGRFSRGEVVKIRTQSGKDIALGMPRYNSDALQLIKGRKSADIENVLGYEYGAVAMHRDDMIILS.

K9 is an ATP binding site. The substrate site is built by S49, D136, and N148. ATP is bound by residues 168–169 (TD) and 210–216 (TGGMMTK). In terms of domain architecture, PUA spans 275–353 (AGIITIDNGA…ADIENVLGYE (79 aa)).

This sequence belongs to the glutamate 5-kinase family.

The protein resides in the cytoplasm. It catalyses the reaction L-glutamate + ATP = L-glutamyl 5-phosphate + ADP. The protein operates within amino-acid biosynthesis; L-proline biosynthesis; L-glutamate 5-semialdehyde from L-glutamate: step 1/2. Catalyzes the transfer of a phosphate group to glutamate to form L-glutamate 5-phosphate. This chain is Glutamate 5-kinase, found in Haemophilus influenzae (strain PittEE).